Here is a 90-residue protein sequence, read N- to C-terminus: MDGLTAAEQRELASRMERKQLKEFMTMYSKLVQRCFDNCVNDFTTKSLISREEGCIMRCVDKYMKASSRLNERFQEQNAAMMQGGQLPGR.

Residues 35–59 (CFDNCVNDFTTKSLISREEGCIMRC) carry the Twin CX3C motif motif. Intrachain disulfides connect cysteine 35–cysteine 59 and cysteine 39–cysteine 55.

It belongs to the small Tim family. In terms of assembly, heterohexamer; composed of 3 copies of TIM9 and 3 copies of TIM10, named soluble 70 kDa complex. Associates with the TIM22 complex, whose core is composed of TIM22 and TIM54. Interacts with the transmembrane regions of multi-pass transmembrane proteins in transit.

The protein resides in the mitochondrion inner membrane. Its function is as follows. Mitochondrial intermembrane chaperone that participates in the import and insertion of multi-pass transmembrane proteins into the mitochondrial inner membrane. Also required for the transfer of beta-barrel precursors from the TOM complex to the sorting and assembly machinery (SAM complex) of the outer membrane. Acts as a chaperone-like protein that protects the hydrophobic precursors from aggregation and guide them through the mitochondrial intermembrane space. The polypeptide is Mitochondrial import inner membrane translocase subunit tim9 (tim9) (Aspergillus fumigatus (strain ATCC MYA-4609 / CBS 101355 / FGSC A1100 / Af293) (Neosartorya fumigata)).